Consider the following 206-residue polypeptide: MNNIYQEDLGLQQYTKVFEDMLEFTSTRTPETNDEIWLVEHPAVFTQGKHGKPEHILNSHNIPIVATDRGGQVTYHGPGQAVIYFLLDIKRNKLGAKKLVTTVEQACINMLDKYYNLKAHIIDGAHGIYINNQKIASLGLRIKQGKSYHGIAINTNMDLTPFSYINPCGYSGLKMCQLANFYQEADIKKVQQQYTAEFVTLLNNSI.

In terms of domain architecture, BPL/LPL catalytic spans 30 to 206 (PETNDEIWLV…EFVTLLNNSI (177 aa)). Substrate-binding positions include 69–76 (RGGQVTYH), 137–139 (SLG), and 150–152 (GIA). C168 serves as the catalytic Acyl-thioester intermediate.

Belongs to the LipB family.

It is found in the cytoplasm. The enzyme catalyses octanoyl-[ACP] + L-lysyl-[protein] = N(6)-octanoyl-L-lysyl-[protein] + holo-[ACP] + H(+). It functions in the pathway protein modification; protein lipoylation via endogenous pathway; protein N(6)-(lipoyl)lysine from octanoyl-[acyl-carrier-protein]: step 1/2. Catalyzes the transfer of endogenously produced octanoic acid from octanoyl-acyl-carrier-protein onto the lipoyl domains of lipoate-dependent enzymes. Lipoyl-ACP can also act as a substrate although octanoyl-ACP is likely to be the physiological substrate. This chain is Octanoyltransferase, found in Francisella tularensis subsp. mediasiatica (strain FSC147).